The sequence spans 2279 residues: Zinc finger protein 318 (2279 aa).

Low complexity-rich tracts occupy residues 1 to 12 (MYRSSARSSVSS) and 25 to 39 (SGRSSGSSSGPARRS). Disordered regions lie at residues 1-140 (MYRS…PGLC) and 164-189 (RRRLSDRLGSPVDNLEDMDRDDLTDD). The tract at residues 1 to 1092 (MYRSSARSSV…THMHNKKHTQ (1092 aa)) is interaction with AR. Position 40 is a phosphoserine (Ser40). The span at 53–67 (PARRPRSPSGHRGRR) shows a compositional bias: basic residues. Phosphoserine is present on residues Ser79 and Ser81. A compositionally biased stretch (basic and acidic residues) spans 110–132 (SRGESRADYARDGRGDHPGDSGS). Phosphoserine occurs at positions 136 and 173. Over residues 177–188 (NLEDMDRDDLTD) the composition is skewed to acidic residues. Tyr205 bears the Phosphotyrosine mark. A phosphoserine mark is found at Ser207 and Ser214. Disordered stretches follow at residues 279–346 (TVKI…DGGG) and 397–416 (LESFSSSTSSSQDHPLYSGH). Over residues 311–333 (LDPEFRELDLARRKREEEEERSR) the composition is skewed to basic and acidic residues. The stretch at 315 to 343 (FRELDLARRKREEEEERSRSLSQELVGVD) forms a coiled coil. Residues Ser464, Ser472, Ser501, and Ser527 each carry the phosphoserine modification. 2 disordered regions span residues 514-533 (LADSTSTQEKRRRSFPDIED) and 540-570 (GDEEEDLKAESVPKPLGSSESEVMRQKASSL). Glycyl lysine isopeptide (Lys-Gly) (interchain with G-Cter in SUMO2) cross-links involve residues Lys547, Lys553, Lys566, and Lys578. A compositionally biased stretch (basic and acidic residues) spans 664–683 (FSADRRSSDPHRLESREAHH). A disordered region spans residues 664-709 (FSADRRSSDPHRLESREAHHSNTHSPEVSHPHPPSPVDPYLLTKNS). Thr842 is subject to Phosphothreonine. The stretch at 876 to 980 (EKISDEKNRA…SELDKVAQIL (105 aa)) forms a coiled coil. Basic and acidic residues-rich tracts occupy residues 922-941 (QQGEMLRKKRREKDGHKDPL) and 989-1012 (QKSLSDSREPTEKPGKAEKSKSPE). Disordered regions lie at residues 922–942 (QQGEMLRKKRREKDGHKDPLL) and 989–1051 (QKSL…TKQL). Position 1010 is a phosphoserine (Ser1010). Over residues 1013–1023 (KVSSFSNSSSN) the composition is skewed to low complexity. The segment covering 1024–1034 (KESKVNNEKFR) has biased composition (basic and acidic residues). Residue Ser1037 is modified to Phosphoserine. Matrin-type zinc fingers lie at residues 1063 to 1097 (AGNHWCKDCNTICGTMFDFFTHMHNKKHTQTLDPY) and 1136 to 1166 (FYCQLCEEFLGDPISGEQHVKGHQHNEKYKK). Composition is skewed to basic and acidic residues over residues 1195 to 1235 (RRQS…KLED), 1242 to 1251 (NSPEKAENKR), 1258 to 1267 (QLKEEVKKES), 1279 to 1288 (KKPEKEEEKS), and 1296 to 1316 (SKEEILESSKDKEDGKTEAGK). The interval 1195–1319 (RRQSELKRKL…GKTEAGKAKP (125 aa)) is disordered. Phosphoserine occurs at positions 1243 and 1267. Ser1420 is subject to Phosphoserine. Disordered stretches follow at residues 1428–1463 (AEKSEPSHLPEQILPPPPPPPPPPPPPPPVIPHPAA), 1577–1628 (GKGA…EELH), 1702–1735 (SSFQSDTSRDISPEKSELDLGEPGPPGVEPPPQL), and 1753–1775 (ESVNQDKESQELRKSEDCRESEI). Positions 1440–1462 (ILPPPPPPPPPPPPPPPVIPHPA) are enriched in pro residues. Residues 1602 to 1623 (SNLSRTKSSDTSSTSPLNSSAS) show a composition bias toward low complexity. Over residues 1708–1719 (TSRDISPEKSEL) the composition is skewed to basic and acidic residues. At Ser1713 the chain carries Phosphoserine. Over residues 1724–1734 (PGPPGVEPPPQ) the composition is skewed to pro residues. A coiled-coil region spans residues 1768–1792 (EDCRESEIETNTELKERVKELSEGI). Phosphoserine occurs at positions 1856, 1896, 1971, 2030, 2035, 2091, 2101, 2189, 2192, and 2243. The tract at residues 2252–2279 (DNMVPQGMPEQETTVGAIQDHTESSVHN) is disordered.

Homodimer. Heterodimer of isoform 1 and isoform 2. Isoform 1 and isoform 2 interact with AR. As to expression, expressed in endocrine tissue.

Its subcellular location is the nucleus. Its function is as follows. Acts as a transcriptional corepressor for AR-mediated transactivation function. May act as a transcriptional regulator during spermatogenesis and, in particular, during meiotic division. Acts as a transcriptional coactivator for AR-mediated transactivation function. May act as a transcriptional regulator during spermatogenesis and, in particular, during meiotic division. The chain is Zinc finger protein 318 (ZNF318) from Homo sapiens (Human).